The chain runs to 527 residues: Catalase (527 aa).

The segment covering 1–22 (MSDSRDPASDQMKQWKEQRASQ) has biased composition (basic and acidic residues). A disordered region spans residues 1–34 (MSDSRDPASDQMKQWKEQRASQRPDVLTTGGGNP). Position 2 is an N-acetylserine (Ser-2). Ser-9 is modified (phosphoserine). An N6-succinyllysine modification is found at Lys-13. Ser-21 carries the phosphoserine modification. Active-site residues include His-75 and Asn-148. NADP(+)-binding residues include His-194, Ser-201, Arg-203, and Asn-213. An N6-succinyllysine modification is found at Lys-221. Lys-233 carries the N6-acetyllysine modification. Residues Lys-237, Trp-303, His-305, and Lys-306 each contribute to the NADP(+) site. Lys-306 carries the post-translational modification N6-acetyllysine; alternate. At Lys-306 the chain carries N6-succinyllysine; alternate. Tyr-358 provides a ligand contact to heme. Phosphoserine occurs at positions 417 and 422. Lys-430 carries the N6-acetyllysine; alternate modification. Lys-430 is modified (N6-succinyllysine; alternate). Phosphoserine is present on Ser-434. N6-acetyllysine; alternate is present on residues Lys-449 and Lys-480. 2 positions are modified to N6-succinyllysine; alternate: Lys-449 and Lys-480. An N6-acetyllysine modification is found at Lys-499. A Phosphothreonine modification is found at Thr-511. At Ser-517 the chain carries Phosphoserine. At Lys-522 the chain carries N6-succinyllysine. The short motif at 524–527 (KANL) is the Microbody targeting signal; atypical element.

It belongs to the catalase family. As to quaternary structure, homotetramer. Interacts (via microbody targeting signal) with PEX5, monomeric form interacts with PEX5, leading to its translocation into peroxisomes. It depends on heme as a cofactor. Requires NADP(+) as cofactor.

It is found in the peroxisome matrix. The enzyme catalyses 2 H2O2 = O2 + 2 H2O. Its function is as follows. Catalyzes the degradation of hydrogen peroxide (H(2)O(2)) generated by peroxisomal oxidases to water and oxygen, thereby protecting cells from the toxic effects of hydrogen peroxide. Promotes growth of cells including T-cells, B-cells, myeloid leukemia cells, melanoma cells, mastocytoma cells and normal and transformed fibroblast cells. The protein is Catalase (Cat) of Mus musculus (Mouse).